The sequence spans 501 residues: Solute carrier family 2, facilitated glucose transporter member 5 (501 aa).

Met-1 carries the post-translational modification N-acetylmethionine. The Cytoplasmic segment spans residues 1-18 (MEPQDPVKREGRLTPVIV). A helical membrane pass occupies residues 19-39 (LATLIAAFGSSFQYGYNVAAI). Tyr-32 is a binding site for D-fructose. At 40 to 68 (NSPSEFMKDFYNYTYYDRVGEYMNEFYLT) the chain is on the extracellular side. N-linked (GlcNAc...) asparagine glycosylation occurs at Asn-51. The chain crosses the membrane as a helical span at residues 69 to 91 (LLWSVTVSMFPFGGFLGSLMVGP). At 92–98 (LVNNLGR) the chain is on the cytoplasmic side. A helical transmembrane segment spans residues 99 to 119 (KGTLLFNNIFSIVPALLMGFS). Residues 120-126 (ELAKSFE) are Extracellular-facing. The chain crosses the membrane as a helical span at residues 127 to 149 (MIIVARVLVGICAGLSSNVVPMY). Over 150-161 (LGELAPKNWRGA) the chain is Cytoplasmic. The chain crosses the membrane as a helical span at residues 162-182 (LGVVPQLFITIGILVAQIFGL). Residue Gln-167 participates in D-fructose binding. The Extracellular portion of the chain corresponds to 183–192 (RSLLANEEGW). Residues 193–213 (PILLGLTGIPAVLQLLFLPFF) traverse the membrane as a helical segment. Topologically, residues 214-277 (PESPRYLLIQ…LFKMRSLRWQ (64 aa)) are cytoplasmic. A helical membrane pass occupies residues 278-298 (VISIIVLMAGQQLSGVNAIYY). Residues Gln-288 and 296–298 (IYY) each bind D-fructose. At 299-313 (YADQIYLSAGVNEDD) the chain is on the extracellular side. Residues 314–334 (VQYVTAGTGAVNVLITVCAIF) traverse the membrane as a helical segment. Over 335-342 (VVELMGRR) the chain is Cytoplasmic. A helical transmembrane segment spans residues 343 to 363 (FLLLLGFSVCFTACCVLTGAL). The Extracellular segment spans residues 364-371 (ALQDVISW). A helical membrane pass occupies residues 372-394 (MPYVSIACVISYVIGHALGPSPI). His-387 serves as a coordination point for D-fructose. Residues 395–412 (PALLVTEIFLQSSRPAAY) lie on the Cytoplasmic side of the membrane. Residues 413–433 (MVAGTVHWLSNFTVGLVFPFI) traverse the membrane as a helical segment. Residue 419-420 (HW) participates in D-fructose binding. Residues 434 to 439 (QVGLGA) are Extracellular-facing. The chain crosses the membrane as a helical span at residues 440 to 460 (YSFVIFAVICLLTTVYIFLII). At 461–501 (PETKSKTFIEINRIFIKMNKVPGVHPEKEELKEFPPSTARQ) the chain is on the cytoplasmic side.

It belongs to the major facilitator superfamily. Sugar transporter (TC 2.A.1.1) family. Glucose transporter subfamily.

It is found in the apical cell membrane. The protein resides in the cell membrane. The protein localises to the sarcolemma. The catalysed reaction is D-fructose(out) = D-fructose(in). In terms of biological role, functions as a fructose transporter that has only low activity with other monosaccharides. Can mediate the uptake of deoxyglucose, but with low efficiency. Essential for fructose uptake in the small intestine. Plays a role in the regulation of salt uptake and blood pressure in response to dietary fructose. Required for the development of high blood pressure in response to high dietary fructose intake. The chain is Solute carrier family 2, facilitated glucose transporter member 5 from Bos taurus (Bovine).